The primary structure comprises 263 residues: E3 ubiquitin-protein ligase SINA-like 8 (263 aa).

Residues 35-71 (CPICCEGLTCPIFQCENGHLACSSCCPKLRNKCPACP) form an RING-type; degenerate zinc finger. The interval 75 to 261 (ILESILVTCP…IKLSIVETSN (187 aa)) is SBD. The segment at 78–136 (SILVTCPNDMFGCTESFLYGKKSTHEEECIFSLCSCPSLDCEYSGRYEDLYDHYKLTHI) adopts an SIAH-type zinc-finger fold. Residues Cys83, Cys90, His102, Cys106, Cys113, Cys118, His130, and His135 each contribute to the Zn(2+) site.

The protein belongs to the SINA (Seven in absentia) family.

It catalyses the reaction S-ubiquitinyl-[E2 ubiquitin-conjugating enzyme]-L-cysteine + [acceptor protein]-L-lysine = [E2 ubiquitin-conjugating enzyme]-L-cysteine + N(6)-ubiquitinyl-[acceptor protein]-L-lysine.. It participates in protein modification; protein ubiquitination. Functionally, E3 ubiquitin-protein ligase that mediates ubiquitination and subsequent proteasomal degradation of target proteins. E3 ubiquitin ligases accept ubiquitin from an E2 ubiquitin-conjugating enzyme in the form of a thioester and then directly transfers the ubiquitin to targeted substrates. It probably triggers the ubiquitin-mediated degradation of different substrates. This chain is E3 ubiquitin-protein ligase SINA-like 8, found in Arabidopsis thaliana (Mouse-ear cress).